The chain runs to 325 residues: Phospholipid phosphatase-related protein type 1 (325 aa).

N-linked (GlcNAc...) asparagine glycosylation occurs at asparagine 5. A run of 3 helical transmembrane segments spans residues 13-33 (IIPC…LLAY), 67-87 (FISP…IIFI), and 127-147 (FIGV…AGQV). The N-linked (GlcNAc...) asparagine glycan is linked to asparagine 163. 3 consecutive transmembrane segments (helical) span residues 201 to 218 (AALS…ITST), 230 to 247 (VLCL…LNRV), and 257 to 277 (VIAG…CVVH). Serine 307 is subject to Phosphoserine. An N-linked (GlcNAc...) asparagine glycan is attached at asparagine 316.

The protein belongs to the PA-phosphatase related phosphoesterase family.

It is found in the cell membrane. The protein localises to the cell projection. Its subcellular location is the neuron projection. Functionally, may play a role in neurite outgrowth and neurogenesis. This chain is Phospholipid phosphatase-related protein type 1, found in Mus musculus (Mouse).